A 356-amino-acid chain; its full sequence is MVDAAVLEKLEAGFKKLEASDSKSLLKKYLTREVFDKLKTKKTPSFGSTLLDCIQSGLENHDSGVGIYAPDAEAYTVFADLFDPIIEDYHGGFKKTDKHPPKNFGDVDTLANLDPNGEYVISTRVRCGRSMQGYPFNPCLTEAQYKEMEQKVSTTLSSLEGELKGQFYPLTGMSKEVQQKLIDDHFLFKEGDRFLQAANACRFWPSGRGIYHNDNKTFLVWCNEEDHLRIISMQPGGDLGQVYRRLVHAVNEIEKRIPFSHDDRLGFLTFCPTNLGTTLRASVHIKLPKLAADRTKLEEVAGKFNLQVRGSTGEHTEAEGGVYDISNKRRMGLTEYDAVKEMNDGILELIKIEGSL.

The Phosphagen kinase N-terminal domain maps to 8–91 (EKLEAGFKKL…FDPIIEDYHG (84 aa)). Residue 64–68 (GVGIY) participates in substrate binding. The 238-residue stretch at 119 to 356 (YVISTRVRCG…LELIKIEGSL (238 aa)) folds into the Phosphagen kinase C-terminal domain. ATP is bound by residues 122–126 (STRVR) and His-185. Residue Glu-225 coordinates substrate. Position 229 (Arg-229) interacts with ATP. Cys-271 provides a ligand contact to substrate. ATP is bound by residues 280-284 (RASVH) and 309-314 (RGSTGE). Glu-314 lines the substrate pocket.

It belongs to the ATP:guanido phosphotransferase family.

The catalysed reaction is L-arginine + ATP = N(omega)-phospho-L-arginine + ADP + H(+). The chain is Arginine kinase (ARGK) from Schistocerca americana (American grasshopper).